A 307-amino-acid polypeptide reads, in one-letter code: Oxygen-dependent coproporphyrinogen-III oxidase (307 aa).

S99 contacts substrate. Residues H103 and H113 each coordinate a divalent metal cation. H113 functions as the Proton donor in the catalytic mechanism. 115-117 (NVR) contacts substrate. A divalent metal cation is bound by residues H152 and H182. The segment at 247–282 (YVEFNLVFDRGTLFGLQSGGRTESILMSMPPVVNWR) is important for dimerization. A substrate-binding site is contributed by 265–267 (GGR).

The protein belongs to the aerobic coproporphyrinogen-III oxidase family. Homodimer. Requires a divalent metal cation as cofactor.

It is found in the cytoplasm. The enzyme catalyses coproporphyrinogen III + O2 + 2 H(+) = protoporphyrinogen IX + 2 CO2 + 2 H2O. It participates in porphyrin-containing compound metabolism; protoporphyrin-IX biosynthesis; protoporphyrinogen-IX from coproporphyrinogen-III (O2 route): step 1/1. In terms of biological role, involved in the heme biosynthesis. Catalyzes the aerobic oxidative decarboxylation of propionate groups of rings A and B of coproporphyrinogen-III to yield the vinyl groups in protoporphyrinogen-IX. The polypeptide is Oxygen-dependent coproporphyrinogen-III oxidase (Paraburkholderia phytofirmans (strain DSM 17436 / LMG 22146 / PsJN) (Burkholderia phytofirmans)).